The chain runs to 1377 residues: Endoribonuclease Dicer homolog 2b (1377 aa).

Residues 1–15 (MGGPLTAAGGRGDGG) show a composition bias toward gly residues. A disordered region spans residues 1 to 30 (MGGPLTAAGGRGDGGAKAVEPLRPPPPPDP). One can recognise a Helicase ATP-binding domain in the interval 41–222 (ALERAVRGNT…HNYSKQISEI (182 aa)). 54–61 (LETGSGKT) lines the ATP pocket. The short motif at 163–166 (DECH) is the DECH box element. The Helicase C-terminal domain occupies 388–561 (TLLQYRHMQD…DTYYRVESTP (174 aa)). One can recognise a Dicer dsRNA-binding fold domain in the interval 534–626 (SLRLGSISCQ…LPELDVPCDE (93 aa)). One can recognise a PAZ domain in the interval 798-913 (RDIDLLQTKD…LPPELCRIIM (116 aa)). RNase III domains are found at residues 940–1095 (SVKL…STAG) and 1132–1276 (VRSL…LDSK). The Mg(2+) site is built by Glu-1171, Asp-1262, and Glu-1265. The DRBM domain maps to 1302 to 1367 (DPVKGLQEFC…SKAVLKDLIA (66 aa)).

It belongs to the helicase family. Dicer subfamily. In terms of assembly, may interact with ARGONAUTE1 or PINHEAD through their common PAZ domains. Mg(2+) serves as cofactor. Mn(2+) is required as a cofactor.

Its subcellular location is the nucleus. In terms of biological role, probably involved in the RNA silencing pathway. May cleave double-stranded RNA to produce short 21-24 nucleotides (nt) RNAs which target the selective destruction of complementary RNAs. In Oryza sativa subsp. japonica (Rice), this protein is Endoribonuclease Dicer homolog 2b (DCL2B).